A 149-amino-acid polypeptide reads, in one-letter code: C-type lectin domain family 2 member B (149 aa).

The Cytoplasmic portion of the chain corresponds to 1-7 (MMTKHKK). A helical; Signal-anchor for type II membrane protein membrane pass occupies residues 8–25 (CFIIVGVLITTNIITLIV). Residues 26 to 149 (KLTRDSQSLC…RKWICRKRIH (124 aa)) are Extracellular-facing. Cysteines 35 and 46 form a disulfide. The 104-residue stretch at 42-145 (FQNKCYYFSK…CYTERKWICR (104 aa)) folds into the C-type lectin domain. N-linked (GlcNAc...) asparagine glycosylation is found at Asn57, Asn62, and Asn100. Cystine bridges form between Cys63–Cys144 and Cys123–Cys136.

Homodimer. Interacts with NKp80/KLRF1. Post-translationally, (Microbial infection) Ubiquitinated by human herpesvirus 8 protein K5, leading to endolysosomal degradation. N-linked glycosylated; required to enable surface expression and the extent of surface expression correlates with the number of functional conventional N-glycosylation sites. Expressed preferentially in lymphoid tissues, and in most hematopoietic cell types.

It localises to the cell membrane. Its subcellular location is the golgi apparatus membrane. Its function is as follows. Membrane-bound protein expressed on myeloid cells which acts as a ligand to stimulate the activating receptor NKp80/KLRF1, expressed on the surface of natural killer (NK) cells. In turn, stimulates NK-cell cytotoxicity and cytokine production leading to the cytolysis of malignant CLEC2B-expressing myeloid cells. The chain is C-type lectin domain family 2 member B (CLEC2B) from Homo sapiens (Human).